The following is a 608-amino-acid chain: MGKIKILEESVAARIAAGEVIERPAGVLKELLENAVDAGADTINIDIDGAGKKLIRVNDNGSGMSKEDLTLSVVRHSTSKIKNFEDLDSLDTFGFRGEALYSVAAVSKLSISSAEEGGSGNKIIVEGGKLISVSPSPNIKGTTVEVKDLFYNTPARLKFLKSDNYERSLLLKVVEESALANLHVSYNVRTDGRLVYSFLASNGDFKKTVIQRAGQILGAEIAVSLISVEDERFGFKAFLTPLSKLTAVRDLQFFFINKRPLTSKTLQQAVYKAYHGRPKDRHPAFIVFMNMPAADFDVNIHPQKRDVKFAQENAVFGFLMNVTQRALTGAAQPVDINITPASPPAATMEFSFAKPRAEEPSYKPFGQNIVEENVFAPISKQAVVVKDFEDPVSYNPEPAEPKKEMGAHVQTDNPSWWQGPYRFLGSLHKSYLIYETELGLMLVDQHAARERVLYEEYLKKMEENELGIQPLMFPVTVDLPASNVENLMLWKDWLKTAGFEIEQFSPRTVLVNAVPNIFRFKEDSLKEFIVSLAGIVGDPLKSSDELKKKTVAMLACKKSIKAKEDVSMAEADALLLDLKRCQDGMHCPHGRPVMVSLSAAELTKKFGR.

The protein belongs to the DNA mismatch repair MutL/HexB family.

In terms of biological role, this protein is involved in the repair of mismatches in DNA. It is required for dam-dependent methyl-directed DNA mismatch repair. May act as a 'molecular matchmaker', a protein that promotes the formation of a stable complex between two or more DNA-binding proteins in an ATP-dependent manner without itself being part of a final effector complex. The polypeptide is DNA mismatch repair protein MutL (Elusimicrobium minutum (strain Pei191)).